Consider the following 468-residue polypeptide: 3-isopropylmalate dehydratase large subunit (468 aa).

The [4Fe-4S] cluster site is built by C347, C407, and C410.

Belongs to the aconitase/IPM isomerase family. LeuC type 1 subfamily. In terms of assembly, heterodimer of LeuC and LeuD. It depends on [4Fe-4S] cluster as a cofactor.

It carries out the reaction (2R,3S)-3-isopropylmalate = (2S)-2-isopropylmalate. It participates in amino-acid biosynthesis; L-leucine biosynthesis; L-leucine from 3-methyl-2-oxobutanoate: step 2/4. Functionally, catalyzes the isomerization between 2-isopropylmalate and 3-isopropylmalate, via the formation of 2-isopropylmaleate. This chain is 3-isopropylmalate dehydratase large subunit, found in Synechococcus elongatus (strain ATCC 33912 / PCC 7942 / FACHB-805) (Anacystis nidulans R2).